Consider the following 464-residue polypeptide: Fumarate hydratase class II (464 aa).

Substrate-binding positions include 98–100, 129–132, 139–141, and T187; these read SGT, HPND, and SSN. The active-site Proton donor/acceptor is H188. Residue S318 is part of the active site. Substrate contacts are provided by residues S319 and 324 to 326; that span reads KVN.

The protein belongs to the class-II fumarase/aspartase family. Fumarase subfamily. As to quaternary structure, homotetramer.

The protein localises to the cytoplasm. The catalysed reaction is (S)-malate = fumarate + H2O. The protein operates within carbohydrate metabolism; tricarboxylic acid cycle; (S)-malate from fumarate: step 1/1. Involved in the TCA cycle. Catalyzes the stereospecific interconversion of fumarate to L-malate. In Pasteurella multocida (strain Pm70), this protein is Fumarate hydratase class II.